The following is a 710-amino-acid chain: Nucleolin (710 aa).

The interval 1–303 (MVKLAKAGKN…KKQKVEGTEP (303 aa)) is disordered. 3 positions are modified to N6-acetyllysine: Lys-9, Lys-15, and Lys-16. Residues 24 to 43 (VEEDSEDEEMSEDEEDDSSG) show a composition bias toward acidic residues. A phosphoserine mark is found at Ser-28, Ser-34, Ser-41, and Ser-42. A compositionally biased stretch (low complexity) spans 56 to 107 (AAATSAKKVVVSPTKKVAVATPAKKAAVTPGKKAAATPAKKTVTPAKAVTTP). Residues 58-65 (ATSAKKVV) form repeat 1. An 8 X 8 AA tandem repeats of X-T-P-X-K-K-X-X region spans residues 58 to 135 (ATSAKKVVVS…GAAIPAKGAK (78 aa)). Phosphoserine is present on Ser-67. Thr-69, Thr-76, Thr-84, and Thr-92 each carry phosphothreonine. Tandem repeats lie at residues 75–82 (ATPAKKAA), 83–90 (VTPGKKAA), and 91–98 (ATPAKKTV). Position 96 is an N6-acetyllysine (Lys-96). Residue Thr-99 is modified to Phosphothreonine. The 5; truncated repeat unit spans residues 99-104 (TPAKAV). At Lys-102 the chain carries N6-acetyllysine. Copy 6 of the repeat occupies 105 to 112 (TTPGKKGA). A Phosphothreonine modification is found at Thr-106. At Lys-109 the chain carries N6-acetyllysine. Thr-113 is modified (phosphothreonine). Lys-116 is modified (N6-acetyllysine). 2 repeat units span residues 120 to 127 (ATPGKKGA) and 128 to 135 (AIPAKGAK). Position 121 is a phosphothreonine (Thr-121). A compositionally biased stretch (low complexity) spans 122-137 (PGKKGAAIPAKGAKNG). Lys-124 is modified (N6-acetyllysine). Ser-145 and Ser-153 each carry phosphoserine. Positions 145-171 (SDEEEDDDSEEDEEDDEDEDEDEDEIE) are enriched in acidic residues. Low complexity predominate over residues 172–183 (PAAMKAAAAAPA). Phosphoserine occurs at positions 184 and 206. The segment covering 184–211 (SEDEDDEDDEDDEDDDDDEEDDSEEEAM) has biased composition (acidic residues). Phosphothreonine is present on Thr-214. A compositionally biased stretch (acidic residues) spans 234-272 (EDEDEEEDDEDEDDDDDEDDEDDDDEDDEEEEEEEEEEP). Residues 273–300 (VKEAPGKRKKEMAKQKAAPEAKKQKVEG) are compositionally biased toward basic and acidic residues. Lys-297 participates in a covalent cross-link: Glycyl lysine isopeptide (Lys-Gly) (interchain with G-Cter in SUMO1); alternate. Residue Lys-297 forms a Glycyl lysine isopeptide (Lys-Gly) (interchain with G-Cter in SUMO2); alternate linkage. Thr-301 is modified (phosphothreonine). RRM domains lie at 307–383 (FNLF…KPKG) and 393–466 (RTLL…YTGE). Position 318 is an N6-acetyllysine (Lys-318). Lys-324 is covalently cross-linked (Glycyl lysine isopeptide (Lys-Gly) (interchain with G-Cter in SUMO1); alternate). Lys-324 participates in a covalent cross-link: Glycyl lysine isopeptide (Lys-Gly) (interchain with G-Cter in SUMO2); alternate. An N6-acetyllysine modification is found at Lys-348. At Ser-356 the chain carries Phosphoserine. Phosphothreonine is present on Thr-367. Lys-370 is covalently cross-linked (Glycyl lysine isopeptide (Lys-Gly) (interchain with G-Cter in SUMO2)). Lys-377 participates in a covalent cross-link: Glycyl lysine isopeptide (Lys-Gly) (interchain with G-Cter in SUMO2); alternate. At Lys-377 the chain carries N6-acetyllysine; alternate. 2 positions are modified to N6-acetyllysine: Lys-398 and Lys-403. Thr-405 is modified (phosphothreonine). Residues Lys-427 and Lys-444 each carry the N6-acetyllysine modification. Ser-458 and Ser-460 each carry phosphoserine. Lys-467 and Lys-477 each carry N6-acetyllysine. The RRM 3 domain occupies 486 to 560 (KTLVLSNLSY…RAIRLELQGP (75 aa)). Lys-513 participates in a covalent cross-link: Glycyl lysine isopeptide (Lys-Gly) (interchain with G-Cter in SUMO2); alternate. Lys-513 carries the post-translational modification N6-acetyllysine; alternate. Lys-521 carries the N6-acetyllysine modification. Ser-563 is modified (phosphoserine). N6-acetyllysine is present on Lys-572. Residues 572–647 (KTLFVKGLSE…NKVTLDWAKP (76 aa)) form the RRM 4 domain. Lys-577 is covalently cross-linked (Glycyl lysine isopeptide (Lys-Gly) (interchain with G-Cter in SUMO2); alternate). Lys-577 is subject to N6-acetyllysine; alternate. Ser-580 is subject to Phosphoserine. Lys-589 participates in a covalent cross-link: Glycyl lysine isopeptide (Lys-Gly) (interchain with G-Cter in SUMO1); alternate. A Glycyl lysine isopeptide (Lys-Gly) (interchain with G-Cter in SUMO2); alternate cross-link involves residue Lys-589. Phosphoserine is present on residues Ser-591 and Ser-619. Residue Lys-624 forms a Glycyl lysine isopeptide (Lys-Gly) (interchain with G-Cter in SUMO2) linkage. The disordered stretch occupies residues 640-710 (VTLDWAKPKG…KPQGKKTKFE (71 aa)). The residue at position 646 (Lys-646) is an N6-acetyllysine. The span at 650 to 696 (EGGFGGRGGGRGGFGGRGGGRGGRGGFGGRGRGGFGGRGGFRGGRGG) shows a compositional bias: gly residues. Residues Arg-656, Arg-660, Arg-666, Arg-670, Arg-673, Arg-679, Arg-681, Arg-687, and Arg-691 each carry the asymmetric dimethylarginine modification. At Arg-694 the chain carries Asymmetric dimethylarginine; alternate. Arg-694 carries the post-translational modification Omega-N-methylarginine; alternate. Basic and acidic residues predominate over residues 697 to 710 (GGDHKPQGKKTKFE).

As to quaternary structure, identified in a IGF2BP1-dependent mRNP granule complex containing untranslated mRNAs. Component of the SWAP complex that consists of NPM1, NCL/nucleolin, PARP1 and SWAP70. Component of a complex which is at least composed of HTATSF1/Tat-SF1, the P-TEFb complex components CDK9 and CCNT1, RNA polymerase II, SUPT5H, and NCL/nucleolin. Interacts with AICDA. Interacts with APTX. Interacts with C1QBP. Interacts with ERBB4. Interacts (via C-terminus) with FMR1 isoform 6 (via N-terminus). Interacts with GZF1; this interaction is important for nucleolar localization of GZF1. Interacts with NSUN2. Interacts with NVL. Interacts (via N-terminus domain) with SETX. Interacts (via RRM1 and C-terminal RRM4/Arg/Gly-rich domains) with TERT; the interaction is important for nucleolar localization of TERT. Interacts with WDR46. Interacts with ZFP36. Interacts with LRRC34. Interacts with RRP1B. Interacts with HNRNPU; this interaction occurs during mitosis. Interacts with RIOK1; RIOK1 recruits NCL to PRMT5 for symmetrically methylation. Interacts with ZBTB7B. Interacts with MDK; this interaction promotes NCL clustering and lateral movements of this complex into lipid rafts leading to MDK internalization. Interacts with HDGF (isoform 1). Interacts with ALKBH2. Interacts with IGFBP5; this interaction is necessary for IGFBP5 localization to the nucleus. Interacts with DDX24 (when ubiquitinated); this interaction may be important during ribosome biogenesis. Some glutamate residues are glycylated by TTLL8. This modification occurs exclusively on glutamate residues and results in a glycine chain on the gamma-carboxyl group. In terms of processing, symmetrically methylated by PRMT5.

The protein resides in the nucleus. The protein localises to the nucleolus. Its subcellular location is the cytoplasm. Its function is as follows. Nucleolin is the major nucleolar protein of growing eukaryotic cells. It is found associated with intranucleolar chromatin and pre-ribosomal particles. It induces chromatin decondensation by binding to histone H1. It is thought to play a role in pre-rRNA transcription and ribosome assembly. May play a role in the process of transcriptional elongation. Binds RNA oligonucleotides with 5'-UUAGGG-3' repeats more tightly than the telomeric single-stranded DNA 5'-TTAGGG-3' repeats. The protein is Nucleolin (NCL) of Homo sapiens (Human).